A 342-amino-acid polypeptide reads, in one-letter code: S-adenosylmethionine:tRNA ribosyltransferase-isomerase (342 aa).

It belongs to the QueA family. In terms of assembly, monomer.

The protein resides in the cytoplasm. It carries out the reaction 7-aminomethyl-7-carbaguanosine(34) in tRNA + S-adenosyl-L-methionine = epoxyqueuosine(34) in tRNA + adenine + L-methionine + 2 H(+). The protein operates within tRNA modification; tRNA-queuosine biosynthesis. Its function is as follows. Transfers and isomerizes the ribose moiety from AdoMet to the 7-aminomethyl group of 7-deazaguanine (preQ1-tRNA) to give epoxyqueuosine (oQ-tRNA). The protein is S-adenosylmethionine:tRNA ribosyltransferase-isomerase of Bacillus subtilis (strain 168).